Here is a 1352-residue protein sequence, read N- to C-terminus: Alpha-protein kinase 1 (1352 aa).

An Arf-GAP domain is found at D7 to D127. A C4-type zinc finger spans residues C25–C48. Disordered regions lie at residues L123–N164, T219–H380, Q424–P445, H457–S484, F503–S560, and I619–N658. Residues G237 to S246 show a composition bias toward polar residues. Low complexity-rich tracts occupy residues N268–N287 and N298–N318. 2 stretches are compositionally biased toward polar residues: residues K329–S352 and H359–H379. A coiled-coil region spans residues T393–S429. Basic residues-rich tracts occupy residues N458–Q470 and H510–S523. The span at I619 to N636 shows a compositional bias: low complexity. Residues Y689–L781 adopt a coiled-coil conformation. Disordered stretches follow at residues P786 to D863 and T901 to R979. A compositionally biased stretch (polar residues) spans P799 to Y812. Positions Q821–S859 are enriched in low complexity. Residues Q906–V915 are compositionally biased toward pro residues. Residues Q931–P965 are compositionally biased toward low complexity. In terms of domain architecture, Alpha-type protein kinase spans R990–V1194. G1164 to G1169 provides a ligand contact to ATP. Disordered stretches follow at residues P1198–F1234 and Q1279–S1352. A coiled-coil region spans residues H1241–G1320. Low complexity predominate over residues Q1279–N1319. Positions H1321–P1332 are enriched in pro residues. The span at Q1334–S1352 shows a compositional bias: basic and acidic residues.

It belongs to the protein kinase superfamily. Alpha-type protein kinase family. ALPK subfamily.

The chain is Alpha-protein kinase 1 (ak1) from Dictyostelium discoideum (Social amoeba).